The sequence spans 88 residues: Defensin-like protein 24 (88 aa).

The signal sequence occupies residues 1–23 (MASSKFVLFAILALSLLLSGTEA). Cystine bridges form between cysteine 37/cysteine 87, cysteine 47/cysteine 72, cysteine 56/cysteine 83, and cysteine 60/cysteine 85.

It belongs to the DEFL family.

It is found in the secreted. The polypeptide is Defensin-like protein 24 (Arabidopsis thaliana (Mouse-ear cress)).